Here is a 324-residue protein sequence, read N- to C-terminus: Acetyl-coenzyme A carboxylase carboxyl transferase subunit alpha (324 aa).

One can recognise a CoA carboxyltransferase C-terminal domain in the interval 37–291 (ILEDKLENLE…DLMIRKTFEQ (255 aa)).

Belongs to the AccA family. Acetyl-CoA carboxylase is a heterohexamer composed of biotin carboxyl carrier protein (AccB), biotin carboxylase (AccC) and two subunits each of ACCase subunit alpha (AccA) and ACCase subunit beta (AccD).

The protein localises to the cytoplasm. The catalysed reaction is N(6)-carboxybiotinyl-L-lysyl-[protein] + acetyl-CoA = N(6)-biotinyl-L-lysyl-[protein] + malonyl-CoA. It participates in lipid metabolism; malonyl-CoA biosynthesis; malonyl-CoA from acetyl-CoA: step 1/1. Functionally, component of the acetyl coenzyme A carboxylase (ACC) complex. First, biotin carboxylase catalyzes the carboxylation of biotin on its carrier protein (BCCP) and then the CO(2) group is transferred by the carboxyltransferase to acetyl-CoA to form malonyl-CoA. This is Acetyl-coenzyme A carboxylase carboxyl transferase subunit alpha from Bacillus cereus (strain G9842).